Here is a 76-residue protein sequence, read N- to C-terminus: Serine palmitoyltransferase small subunit B (76 aa).

At M1 to S11 the chain is on the cytoplasmic side. A helical transmembrane segment spans residues W12–W29. Over E30–T36 the chain is Lumenal. The chain crosses the membrane as a helical span at residues I37–I57. Residues R58–N76 are Cytoplasmic-facing.

Belongs to the SPTSS family. SPTSSB subfamily. As to quaternary structure, component of the serine palmitoyltransferase (SPT) complex, which is composed of SPTLC1, SPTLC2 or SPTLC3 and SPTSSA or SPTSSB. The heterodimer consisting of SPTLC1 and SPTLC2/SPTLC3 forms the catalytic core of the enzyme, while SPTSSA or SPTSSB subunits determine substrate specificity. SPT also interacts with ORMDL proteins, especially ORMDL3, which negatively regulate SPT activity in the presence of ceramides.

The protein resides in the endoplasmic reticulum membrane. Its pathway is lipid metabolism; sphingolipid metabolism. Component of the serine palmitoyltransferase multisubunit enzyme (SPT) that catalyzes the initial and rate-limiting step in sphingolipid biosynthesis by condensing L-serine and activated acyl-CoA (most commonly palmitoyl-CoA) to form long-chain bases. The SPT complex is composed of SPTLC1, SPTLC2 or SPTLC3 and SPTSSA or SPTSSB. Within this complex, the heterodimer consisting of SPTLC1 and SPTLC2/SPTLC3 forms the catalytic core. Within the SPT complex, SPTSSB stimulates the catalytic activity and plays a role in substrate specificity. SPT complexes with this subunit showing a preference for longer acyl-CoAs. The SPTLC1-SPTLC2-SPTSSB complex shows a strong preference for C18-CoA substrate, while the SPTLC1-SPTLC3-SPTSSB isozyme displays an ability to use a broader range of acyl-CoAs, without apparent preference. This chain is Serine palmitoyltransferase small subunit B (SPTSSB), found in Bos taurus (Bovine).